Here is a 1080-residue protein sequence, read N- to C-terminus: Adenylate cyclase type 7 (1080 aa).

Over 1 to 33 the chain is Cytoplasmic; sequence MPAKGRYFLNEGEEGPDQDALYEKYQLTSQHGP. 6 helical membrane passes run 34–54, 63–83, 95–117, 122–142, 147–167, and 176–196; these read LLLT…IIAF, QAIL…SVLM, ALAL…DAWT, AWEQ…LLPF, AVAV…SLMG, and VGLQ…TGAF. Topologically, residues 197–594 are cytoplasmic; that stretch reads HKHQMQDASR…YRLAPIPRAR (398 aa). In terms of domain architecture, Guanylate cyclase 1 spans 279-406; sequence SILYADIVGF…HDVSLANRME (128 aa). Mg(2+) contacts are provided by D284, I285, and D328. ATP contacts are provided by residues 284–289, 326–328, and R372; these read DIVGFT and LGD. Residues 454-474 form a disordered region; the sequence is DPRSQQPPPPSQHLPRPKGDA. Residues 477–482 are mediates regulation of adenylate cyclase activity by C5 alpha-induced G- beta and gamma pathway; it reads KMRASV. The tract at residues 491–499 is mediates regulation of adenylate cyclase activity by sphingosine 1-phosphate-induced G alpha 13 pathway; the sequence is WGAARPFAH. Residues 504-546 form a disordered region; it reads ESVSSGETHVPNGRRPKSVPQRHRRTPDRSMSPKGRSEDDSYD. The tract at residues 506–584 is modulates adenylate cyclase activity by modulating the binding of G(s)alpha to the high-affinity G(s)alpha binding site in 7C1a/7C2; sequence VSSGETHVPN…IFLEKGFERE (79 aa). The span at 515 to 529 shows a compositional bias: basic residues; sequence NGRRPKSVPQRHRRT. Transmembrane regions (helical) follow at residues 595-615, 620-640, and 669-688; these read HDFA…VLLM, ALGV…GLCF, and LTLA…INLP. N-linked (GlcNAc...) asparagine glycosylation is present at N701. Transmembrane regions (helical) follow at residues 718-737 and 746-773; these read PLPY…SVFL and VLLT…CGQG. N-linked (GlcNAc...) asparagine glycosylation is found at N776 and N781. Residues 794–814 traverse the membrane as a helical segment; sequence DLKTMTNFYLVLFYITLLTLS. The Cytoplasmic portion of the chain corresponds to 815-1080; that stretch reads RQIDYYCRLD…TAKFQGLGLN (266 aa). The Guanylate cyclase 2 domain maps to 879–1023; sequence CVMFASVPDF…NTVNVASRME (145 aa). Residues K931, 1010–1012, 1017–1021, and K1057 contribute to the ATP site; these read DIW and NVASR.

The protein belongs to the adenylyl cyclase class-4/guanylyl cyclase family. The cofactor is Mg(2+). Mn(2+) serves as cofactor. Phosphorylated by PRKCD.

It localises to the membrane. It catalyses the reaction ATP = 3',5'-cyclic AMP + diphosphate. Activated by the G protein alpha subunit. Activated by the G protein beta and gamma subunit complex. Activated by GNA13 and GNA12. Ethanol and phorbol 12,13-dibutanoate significantly potentiate adenylate cyclase activity generated in response to the activation of the prostanoid receptor by the agonist prostaglandin E1(1-) in a PKC-dependent manner. Inhibited by lithium. Its function is as follows. Catalyzes the formation of cAMP in response to activation of G protein-coupled receptors. Functions in signaling cascades activated namely by thrombin and sphingosine 1-phosphate and mediates regulation of cAMP synthesis through synergistic action of the stimulatory G alpha protein with GNA13. Also, during inflammation, mediates zymosan-induced increase intracellular cAMP, leading to protein kinase A pathway activation in order to modulate innate immune responses through heterotrimeric G proteins G(12/13). Functions in signaling cascades activated namely by dopamine and C5 alpha chain and mediates regulation of cAMP synthesis through synergistic action of the stimulatory G protein with G beta:gamma complex. Functions, through cAMP response regulation, to keep inflammation under control during bacterial infection by sensing the presence of serum factors, such as the bioactive lysophospholipid (LPA) that regulate LPS-induced TNF-alpha production. However, it is also required for the optimal functions of B and T cells during adaptive immune responses by regulating cAMP synthesis in both B and T cells. This chain is Adenylate cyclase type 7, found in Homo sapiens (Human).